The chain runs to 27 residues: Caerulein precursor fragment R4 (27 aa).

As to expression, expressed by the skin glands.

Its subcellular location is the secreted. Antimicrobial peptide. The polypeptide is Caerulein precursor fragment R4 (Xenopus ruwenzoriensis (Uganda clawed frog)).